The sequence spans 516 residues: Membrane-bound transcription factor site-2 protease (516 aa).

Residues M1–P3 lie on the Cytoplasmic side of the membrane. Residues V4–L24 form a helical membrane-spanning segment. Residues K25–Q74 lie on the Lumenal side of the membrane. Transmembrane regions (helical) follow at residues W75–G95 and K96–A107. At D108–Q141 the chain is on the lumenal side. Residues V142 to V166 traverse the membrane as a helical segment. Residue H168 participates in Zn(2+) binding. Residue E169 is part of the active site. Transmembrane regions (helical) follow at residues G171–F183, N184–L206, and F226–Y248. H172 contributes to the Zn(2+) binding site. Residues T249 to K443 are Lumenal-facing. The N-linked (GlcNAc...) asparagine glycan is linked to N334. Helical transmembrane passes span Y444–F461 and A462–L473. Residues D474–L489 lie on the Lumenal side of the membrane. A helical transmembrane segment spans residues I490–L510. The Cytoplasmic segment spans residues W511–R516.

It belongs to the peptidase M50A family. Requires Zn(2+) as cofactor.

It localises to the membrane. The protein resides in the cytoplasm. The protein localises to the golgi apparatus membrane. It catalyses the reaction Cleaves several transcription factors that are type-2 transmembrane proteins within membrane-spanning domains. Known substrates include sterol regulatory element-binding protein (SREBP) -1, SREBP-2 and forms of the transcriptional activator ATF6. SREBP-2 is cleaved at the site 477-DRSRILL-|-CVLTFLCLSFNPLTSLLQWGGA-505. The residues Asn-Pro, 11 residues distal to the site of cleavage in the membrane-spanning domain, are important for cleavage by S2P endopeptidase. Replacement of either of these residues does not prevent cleavage, but there is no cleavage if both of these residues are replaced.. Functionally, zinc metalloprotease that mediates intramembrane proteolysis of proteins such as ATF6, ATF6B, SREBF1/SREBP1 and SREBF2/SREBP2. Catalyzes the second step in the proteolytic activation of the sterol regulatory element-binding proteins (SREBPs) SREBF1/SREBP1 and SREBF2/SREBP2: cleaves SREBPs within the first transmembrane segment, thereby releasing the N-terminal segment with a portion of the transmembrane segment attached. Mature N-terminal SREBP fragments shuttle to the nucleus and activate gene transcription. Also mediates the second step in the proteolytic activation of the cyclic AMP-dependent transcription factor ATF-6 (ATF6 and ATF6B). Involved in intramembrane proteolysis during bone formation. In astrocytes and osteoblasts, upon DNA damage and ER stress, mediates the second step of the regulated intramembrane proteolytic activation of the transcription factor CREB3L1, leading to the inhibition of cell-cycle progression. The protein is Membrane-bound transcription factor site-2 protease of Bos taurus (Bovine).